A 680-amino-acid chain; its full sequence is Dihydroxyacetone phosphate acyltransferase (680 aa).

Residues serine 12 and serine 17 each carry the phosphoserine modification. The HXXXXD motif signature appears at 162–167 (HRSYID). Residue lysine 643 is modified to N6-acetyllysine. Positions 678–680 (AKL) match the Microbody targeting signal motif.

The protein belongs to the GPAT/DAPAT family. As to quaternary structure, part of a heterotrimeric complex composed of GNPAT, AGPS and a modified form of GNPAT.

It localises to the peroxisome membrane. The catalysed reaction is dihydroxyacetone phosphate + an acyl-CoA = a 1-acylglycerone 3-phosphate + CoA. It catalyses the reaction dihydroxyacetone phosphate + hexadecanoyl-CoA = 1-hexadecanoylglycerone 3-phosphate + CoA. The protein operates within membrane lipid metabolism; glycerophospholipid metabolism. In terms of biological role, dihydroxyacetonephosphate acyltransferase catalyzing the first step in the biosynthesis of plasmalogens, a subset of phospholipids that differ from other glycerolipids by having an alkyl chain attached through a vinyl ether linkage at the sn-1 position of the glycerol backbone, and which unique physical properties have an impact on various aspects of cell signaling and membrane biology. In Bos taurus (Bovine), this protein is Dihydroxyacetone phosphate acyltransferase.